The sequence spans 739 residues: MQQTYQYGWIIPFIPLPIPILIGVGLLLFPTATKNLRRMWSFQSVLLLTIVMIFSINLSIQQINSNSIYQYVWSWIINNDFSLEFGYLIDPLTSIMSILITTVGIMVLIYSDNYMAHDQAYLRFFAYMGFFSTSMLGLVTSSNLIQIYIFWELVGMCSYLLIGFWFTRPLAANACQKAFVTNRIGDFGLLLGILGFYWITGSFEFRDLFEIFNNLIYDNEVNSLFVTLCAGLVFAGAVAKSAQFPLHVWLPDAMEGPTPISALIHAATMVAAGIFLVARLIPLFIVIPYIMNFISLIGIITVLLGATLALAQKDIKRGLAFSTMSQLGYMMLALGMGSYRSALFHLITHAYSKALLFLGSGSVIHSMETIVGYSPYKSQNMVLMGGLTKHIPITKNTFLLGTLSLCGIPPLACFWSKDEILNDSWLYSTIFAIIAWATAGLTAFYIFRIYLLTFEGHLSVHFQNYIGKEKVFFYSISLWGRGASKKINNNFSLSTMNNIESSSFLKKKTYPIAENVRNVTRPFITITHFENKKFYSYPYEPDNTMLFPLLILGLFTLFVGSIGIPFNQEGVDLBILSKWLTPSINLLHQKLSNSMDWYEFWKDTVSSVSIAYLGIFIASLLYKPPYSSLQNFDLINSILKRGPKRILWDKIINGVYNWSYNRAYIDSFYTRSFTGGIRGLAKLTHFFDRRIVDGITNGVGVINFFIGEAIKYIGGGRISSYLFFYLTYVSIFLLVFFII.

16 helical membrane passes run 9 to 29 (WIIP…LLLF), 40 to 60 (WSFQ…NLSI), 89 to 109 (IDPL…MVLI), 125 to 145 (FAYM…SNLI), 147 to 167 (IYIF…FWFT), 184 to 204 (IGDF…GSFE), 224 to 244 (LFVT…SAQF), 258 to 278 (TPIS…FLVA), 289 to 311 (YIMN…LALA), 318 to 338 (GLAF…GMGS), 354 to 374 (ALLF…VGYS), 396 to 416 (NTFL…CFWS), 427 to 447 (YSTI…FYIF), 546 to 566 (LFPL…GIPF), 605 to 625 (VSSV…YKPP), and 718 to 738 (ISSY…VFFI).

It belongs to the complex I subunit 5 family. In terms of assembly, NDH is composed of at least 16 different subunits, 5 of which are encoded in the nucleus.

It localises to the plastid. It is found in the chloroplast thylakoid membrane. It catalyses the reaction a plastoquinone + NADH + (n+1) H(+)(in) = a plastoquinol + NAD(+) + n H(+)(out). The enzyme catalyses a plastoquinone + NADPH + (n+1) H(+)(in) = a plastoquinol + NADP(+) + n H(+)(out). NDH shuttles electrons from NAD(P)H:plastoquinone, via FMN and iron-sulfur (Fe-S) centers, to quinones in the photosynthetic chain and possibly in a chloroplast respiratory chain. The immediate electron acceptor for the enzyme in this species is believed to be plastoquinone. Couples the redox reaction to proton translocation, and thus conserves the redox energy in a proton gradient. This Coffea arabica (Arabian coffee) protein is NAD(P)H-quinone oxidoreductase subunit 5, chloroplastic (ndhF).